Reading from the N-terminus, the 90-residue chain is Small ribosomal subunit protein uS15c (90 aa).

The protein belongs to the universal ribosomal protein uS15 family. As to quaternary structure, part of the 30S ribosomal subunit.

The protein localises to the plastid. Its subcellular location is the chloroplast. This is Small ribosomal subunit protein uS15c (rps15) from Buxus microphylla (Littleleaf boxwood).